The primary structure comprises 1287 residues: SCL-interrupting locus protein (1287 aa).

Residue M1 is modified to N-acetylmethionine. Residues 1–1018 are interaction with RBM14; the sequence is MEPIYPFARP…IDSPTKVKKN (1018 aa). Residues 231-781 form an interaction with CPAP region; it reads YKYGYLTMDE…VSVEAQSSPG (551 aa). Disordered stretches follow at residues 378–417 and 508–533; these read RSSQ…SQKI and PPAY…PSHD. S395 carries the phosphoserine modification. A compositionally biased stretch (polar residues) spans 517–529; sequence HTRNSIKPSSHNG. A PIN1-binding region spans residues 584-779; sequence PMELQIPTPP…ELVSVEAQSS (196 aa). Residues S753, S779, and S1135 each carry the phosphoserine modification.

In terms of assembly, homodimer. Interacts with PIN1 via its WW domain. This interaction is dependent on STIL mitotic phosphorylation. Interacts with CPAP. Interacts with RBM14 and this interaction interferes with the interaction of STIL with CPAP. Forms a complex with CPAP and SASS6. Interacts (via N-terminus) with CEP85; this interaction is essential for efficient centriolar targeting of STIL and subsequent PLK4 activation. Ubiquitinated. Post-translationally, phosphorylated following the activation of the mitotic checkpoint. Expressed in all hematopoietic tissues and cell lines. Highly expressed in a variety of tumors characterized by increased mitotic activity with highest expression in lung cancer.

The protein resides in the cytoplasm. It localises to the cytosol. It is found in the cytoskeleton. Its subcellular location is the microtubule organizing center. The protein localises to the centrosome. The protein resides in the centriole. It localises to the cell cortex. Its function is as follows. Immediate-early gene. Plays an important role in embryonic development as well as in cellular growth and proliferation; its long-term silencing affects cell survival and cell cycle distribution as well as decreases CDK1 activity correlated with reduced phosphorylation of CDK1. Plays a role as a positive regulator of the sonic hedgehog pathway, acting downstream of PTCH1. Plays an important role in the regulation of centriole duplication. Required for the onset of procentriole formation and proper mitotic progression. During procentriole formation, is essential for the correct loading of SASS6 and CPAP to the base of the procentriole to initiate procentriole assembly. In complex with STIL acts as a modulator of PLK4-driven cytoskeletal rearrangements and directional cell motility. This is SCL-interrupting locus protein (STIL) from Homo sapiens (Human).